Here is a 647-residue protein sequence, read N- to C-terminus: ATP-binding protein Uup (647 aa).

ABC transporter domains lie at 1 to 253 and 320 to 546; these read MALI…RVEA and FEME…AKAK. ATP-binding positions include 36–43 and 352–359; these read GRNGAGKS and GPNGCGKT. Over residues 545–563 the composition is skewed to basic and acidic residues; it reads AKKSEPLKEESAVKNDRTS. The segment at 545–569 is disordered; the sequence is AKKSEPLKEESAVKNDRTSKPKSVK. The tract at residues 559–647 is C-terminal domain (CTD), binds DNA; the sequence is NDRTSKPKSV…EKKNLVEGKA (89 aa).

Belongs to the ABC transporter superfamily. ABCF family. Uup subfamily.

The protein resides in the cytoplasm. The catalysed reaction is ATP + H2O = ADP + phosphate + H(+). Probably plays a role in ribosome assembly or function. May be involved in resolution of branched DNA intermediates that result from template switching in postreplication gaps. Binds DNA and has ATPase activity. The chain is ATP-binding protein Uup from Haemophilus influenzae (strain ATCC 51907 / DSM 11121 / KW20 / Rd).